The primary structure comprises 113 residues: MSTITTSSVASSNGMRKNGKNWHDSKKPFRPTSGLTSYEKRLEARKLQEAVKEHEREMREEREAERKAQIQKIKDRRAAKEEKERYEKMAEKMHRKRVERLKRREKRNKLLHS.

Polar residues predominate over residues 1–15 (MSTITTSSVASSNGM). Residues 1-113 (MSTITTSSVA…REKRNKLLHS (113 aa)) are disordered. Residues 37-100 (SYEKRLEARK…EKMHRKRVER (64 aa)) are a coiled coil. Over residues 38 to 92 (YEKRLEARKLQEAVKEHEREMREEREAERKAQIQKIKDRRAAKEEKERYEKMAEK) the composition is skewed to basic and acidic residues. Positions 93 to 113 (MHRKRVERLKRREKRNKLLHS) are enriched in basic residues.

Belongs to the CGR1 family.

It is found in the nucleus. It localises to the nucleolus. Its function is as follows. Involved in nucleolar integrity and required for processing of the pre-rRNA for the 60S ribosome subunit. The chain is rRNA-processing protein cgrA (cgrA) from Aspergillus clavatus (strain ATCC 1007 / CBS 513.65 / DSM 816 / NCTC 3887 / NRRL 1 / QM 1276 / 107).